Reading from the N-terminus, the 516-residue chain is Cytochrome P450 93G1 (516 aa).

A helical membrane pass occupies residues 11 to 31; it reads LLGMGTTMGALALALVVVVVV. C454 serves as a coordination point for heme.

The protein belongs to the cytochrome P450 family. Heme serves as cofactor.

It localises to the membrane. It catalyses the reaction a flavanone + reduced [NADPH--hemoprotein reductase] + O2 = a flavone + oxidized [NADPH--hemoprotein reductase] + 2 H2O + H(+). The protein operates within secondary metabolite biosynthesis; flavonoid biosynthesis. Functionally, functions as a flavone synthase II (FNSII) that catalyzes the direct conversion of flavanones to flavones. In vitro, can convert naringenin and eriodictyol to apigenin and luteolin, respectively. Acts as a key branch point enzyme that channels flavanones to the biosynthesis of soluble tricin O-linked conjugates. In Oryza sativa subsp. japonica (Rice), this protein is Cytochrome P450 93G1.